The sequence spans 455 residues: Virion host shutoff protein (455 aa).

It belongs to the herpesviridae VHS protein family.

The protein resides in the virion. Minor structural protein that acts as an endoribonuclease during lytic infection. Degrades host mRNAs in the cytoplasm by cutting them at preferred sites, including some in regions of translation initiation. The sequence is that of Virion host shutoff protein (17) from Homo sapiens (Human).